The sequence spans 1012 residues: Axonemal dynein light chain domain-containing protein 1 (1012 aa).

Low complexity predominate over residues 1–17 (MSLPKTPSTPLNSTSTS). The tract at residues 1-34 (MSLPKTPSTPLNSTSTSESKKLKVSVAKEGTRGL) is disordered. Coiled-coil stretches lie at residues 317–402 (QRIL…IWSS), 447–486 (EDLA…IVKD), and 572–597 (SERQ…RING). Residues 841–854 (PEIDESFKEDEEES) show a composition bias toward acidic residues. Disordered stretches follow at residues 841 to 879 (PEID…TEKE) and 963 to 1012 (LEEL…KKGH). Basic and acidic residues-rich tracts occupy residues 855-879 (KEDR…TEKE) and 963-987 (LEEL…REVK). Over residues 988 to 997 (EEEEQQEEEE) the composition is skewed to acidic residues.

Highly expressed in testis. Highly expressed in the round and late spermatids.

The protein localises to the cytoplasm. In terms of biological role, may be essential for spermiogenesis and male fertility probably by regulating the manchette dynamics, spermatid head shaping and sperm flagellum assembly. This chain is Axonemal dynein light chain domain-containing protein 1, found in Homo sapiens (Human).